The chain runs to 405 residues: Mitochondrial outer membrane protein SLC25A46 (405 aa).

The tract at residues 1 to 77 is disordered; sequence MTSRRPDSFE…PDEAQSAAPP (77 aa). Residues 22 to 37 are compositionally biased toward low complexity; that stretch reads FSGGYSGRSFNNSSSS. The Solcar 1 repeat unit spans residues 80–171; it reads QLNRFAGFGI…GIISECTPLP (92 aa). 6 helical membrane-spanning segments follow: residues 87–107, 151–171, 183–203, 242–262, 302–322, and 371–391; these read FGIGLASLFTENVLAHPCIVF, FVVQGVTLGTEGIISECTPLP, VVGHLVLKGLTYVVAMPFYSA, LLPLWNLVLPTVLHGILHYII, FPELMASFAASLCADVLLFPL, and MGFYKGFGSIVVQYSLHATVL. The Solcar 2 repeat unit spans residues 299–401; that stretch reads DAYFPELMAS…QITKMIYSTL (103 aa).

It belongs to the mitochondrial carrier (TC 2.A.29) family.

It is found in the mitochondrion outer membrane. In terms of biological role, transmembrane protein of the mitochondrial outer membrane that controls mitochondrial organization. May regulate the biogenesis and dynamics of mitochondrial cristae, the inwards folds of the inner mitochondrial membrane. Could regulate mitochondrial lipid homeostasis and thereby mitochondrial fission. The protein is Mitochondrial outer membrane protein SLC25A46 (slc25a46) of Danio rerio (Zebrafish).